A 61-amino-acid polypeptide reads, in one-letter code: MKGTPSFGKMNKSPTHVRCRRCGRNSFNVRKGYCAACGFGRSKKIRRYNWQNKKVNGLRLV.

Cysteine 19, cysteine 22, cysteine 34, and cysteine 37 together coordinate Zn(2+). Residues 19 to 37 (CRRCGRNSFNVRKGYCAAC) form a C4-type zinc finger.

It belongs to the eukaryotic ribosomal protein eL37 family. Zn(2+) is required as a cofactor.

Functionally, binds to the 23S rRNA. This is Large ribosomal subunit protein eL37 (rpl37e) from Sulfurisphaera tokodaii (strain DSM 16993 / JCM 10545 / NBRC 100140 / 7) (Sulfolobus tokodaii).